A 729-amino-acid polypeptide reads, in one-letter code: Phosphoribosylformylglycinamidine synthase subunit PurL (729 aa).

Histidine 54 is an active-site residue. ATP-binding residues include tyrosine 57 and lysine 96. Glutamate 98 is a Mg(2+) binding site. Substrate-binding positions include 99–102 and arginine 121; that span reads SHNH. The active-site Proton acceptor is the histidine 100. Aspartate 122 contacts Mg(2+). Residue glutamine 245 participates in substrate binding. Aspartate 273 is a Mg(2+) binding site. 317-319 is a substrate binding site; the sequence is ETQ. Aspartate 495 and glycine 532 together coordinate ATP. Asparagine 533 contacts Mg(2+). Residue serine 535 participates in substrate binding.

Belongs to the FGAMS family. As to quaternary structure, monomer. Part of the FGAM synthase complex composed of 1 PurL, 1 PurQ and 2 PurS subunits.

It localises to the cytoplasm. It catalyses the reaction N(2)-formyl-N(1)-(5-phospho-beta-D-ribosyl)glycinamide + L-glutamine + ATP + H2O = 2-formamido-N(1)-(5-O-phospho-beta-D-ribosyl)acetamidine + L-glutamate + ADP + phosphate + H(+). It participates in purine metabolism; IMP biosynthesis via de novo pathway; 5-amino-1-(5-phospho-D-ribosyl)imidazole from N(2)-formyl-N(1)-(5-phospho-D-ribosyl)glycinamide: step 1/2. In terms of biological role, part of the phosphoribosylformylglycinamidine synthase complex involved in the purines biosynthetic pathway. Catalyzes the ATP-dependent conversion of formylglycinamide ribonucleotide (FGAR) and glutamine to yield formylglycinamidine ribonucleotide (FGAM) and glutamate. The FGAM synthase complex is composed of three subunits. PurQ produces an ammonia molecule by converting glutamine to glutamate. PurL transfers the ammonia molecule to FGAR to form FGAM in an ATP-dependent manner. PurS interacts with PurQ and PurL and is thought to assist in the transfer of the ammonia molecule from PurQ to PurL. The protein is Phosphoribosylformylglycinamidine synthase subunit PurL of Staphylococcus aureus (strain USA300).